An 89-amino-acid chain; its full sequence is Small ribosomal subunit protein bS20 (89 aa).

Belongs to the bacterial ribosomal protein bS20 family.

Binds directly to 16S ribosomal RNA. The polypeptide is Small ribosomal subunit protein bS20 (Wolbachia pipientis subsp. Culex pipiens (strain wPip)).